The following is a 337-amino-acid chain: Phosphatidate cytidylyltransferase, mitochondrial (337 aa).

The protein belongs to the TAM41 family. It depends on Mg(2+) as a cofactor.

The protein localises to the mitochondrion inner membrane. It catalyses the reaction a 1,2-diacyl-sn-glycero-3-phosphate + CTP + H(+) = a CDP-1,2-diacyl-sn-glycerol + diphosphate. It participates in phospholipid metabolism; CDP-diacylglycerol biosynthesis; CDP-diacylglycerol from sn-glycerol 3-phosphate: step 3/3. Functionally, catalyzes the conversion of phosphatidic acid (PA) to CDP-diacylglycerol (CDP-DAG), an essential intermediate in the synthesis of phosphatidylglycerol, cardiolipin and phosphatidylinositol. The chain is Phosphatidate cytidylyltransferase, mitochondrial (Tamm41) from Mus musculus (Mouse).